The following is a 475-amino-acid chain: ADP-ribose glycohydrolase MACROD2 (475 aa).

Residues Q59–F240 form the Macro domain. Substrate is bound by residues G77–I79, A90–N92, and G97–D102. K170 is covalently cross-linked (Glycyl lysine isopeptide (Lys-Gly) (interchain with G-Cter in ubiquitin)). Residues I185 to G191 and F224 contribute to the substrate site. 2 disordered regions span residues P241–A306 and G324–Q475. Composition is skewed to basic and acidic residues over residues A251–E261 and S335–M359. Polar residues predominate over residues T360–N375. A compositionally biased stretch (basic and acidic residues) spans D376–A386. 2 stretches are compositionally biased toward polar residues: residues E387–Q402 and S440–S469.

Belongs to the MacroD-type family. MacroD1/2-like subfamily. As to quaternary structure, interacts with ADP-ribosylated PARP1. Expressed in the kidney.

The protein resides in the nucleus. The catalysed reaction is 2''-O-acetyl-ADP-D-ribose + H2O = ADP-D-ribose + acetate + H(+). The enzyme catalyses 4-O-(ADP-D-ribosyl)-L-aspartyl-[protein] + H2O = L-aspartyl-[protein] + ADP-D-ribose + H(+). It carries out the reaction 5-O-(ADP-D-ribosyl)-L-glutamyl-[protein] + H2O = L-glutamyl-[protein] + ADP-D-ribose + H(+). It catalyses the reaction alpha-NAD(+) + H2O = ADP-D-ribose + nicotinamide + H(+). Subject to product inhibition by ADP-ribose. Its function is as follows. Removes ADP-ribose from aspartate and glutamate residues in proteins bearing a single ADP-ribose moiety. Inactive towards proteins bearing poly-ADP-ribose. Deacetylates O-acetyl-ADP ribose, a signaling molecule generated by the deacetylation of acetylated lysine residues in histones and other proteins. This Mus musculus (Mouse) protein is ADP-ribose glycohydrolase MACROD2.